The chain runs to 399 residues: L-asparaginase-like protein GG20738 (399 aa).

Positions 1-22 are cleaved as a signal peptide; the sequence is MLAQSCCLRLLILLLLCKSTCS. 3 disulfides stabilise this stretch: cysteine 90-cysteine 95, cysteine 189-cysteine 205, and cysteine 344-cysteine 371.

The protein belongs to the Ntn-hydrolase family.

This Drosophila erecta (Fruit fly) protein is L-asparaginase-like protein GG20738.